A 152-amino-acid chain; its full sequence is Transcriptional repressor NrdR (152 aa).

Residues C3–C34 fold into a zinc finger. The 91-residue stretch at P49–A139 folds into the ATP-cone domain.

It belongs to the NrdR family. It depends on Zn(2+) as a cofactor.

Functionally, negatively regulates transcription of bacterial ribonucleotide reductase nrd genes and operons by binding to NrdR-boxes. In Psychrobacter arcticus (strain DSM 17307 / VKM B-2377 / 273-4), this protein is Transcriptional repressor NrdR.